A 490-amino-acid chain; its full sequence is Subtilisin-like protease 8 (490 aa).

Positions 1 to 26 (MKGLLSLSVLPVLAYASPMIVDSIHQ) are cleaved as a signal peptide. Residues 27–134 (NAAPILSSTN…YIERDSEVHT (108 aa)) constitute a propeptide that is removed on maturation. In terms of domain architecture, Inhibitor I9 spans 43 to 134 (SYIVVFKKGV…YIERDSEVHT (92 aa)). One can recognise a Peptidase S8 domain in the interval 144–450 (PWGLARISHR…GGSDDYKKII (307 aa)). Catalysis depends on charge relay system residues Asp-180 and His-212. An N-linked (GlcNAc...) asparagine glycan is attached at Asn-282. Ser-378 acts as the Charge relay system in catalysis. Asn-456 is a glycosylation site (N-linked (GlcNAc...) asparagine).

The protein belongs to the peptidase S8 family.

The protein resides in the secreted. In terms of biological role, secreted subtilisin-like serine protease with keratinolytic activity that contributes to pathogenicity. In Arthroderma benhamiae (strain ATCC MYA-4681 / CBS 112371) (Trichophyton mentagrophytes), this protein is Subtilisin-like protease 8 (SUB8).